The following is a 66-amino-acid chain: Large ribosomal subunit protein bL33c (66 aa).

The protein belongs to the bacterial ribosomal protein bL33 family.

The protein localises to the plastid. It localises to the chloroplast. The sequence is that of Large ribosomal subunit protein bL33c from Carica papaya (Papaya).